The sequence spans 515 residues: GMP synthase [glutamine-hydrolyzing] (515 aa).

The region spanning 6–198 is the Glutamine amidotransferase type-1 domain; that stretch reads KVIIIDYGSQ…LFHVAKLKAD (193 aa). Catalysis depends on C83, which acts as the Nucleophile. Residues H172 and E174 contribute to the active site. The 192-residue stretch at 199 to 390 folds into the GMPS ATP-PPase domain; sequence WTMSSFVERA…LGLPDFIIWR (192 aa). 226–232 contributes to the ATP binding site; the sequence is SGGIDST.

As to quaternary structure, homodimer.

The catalysed reaction is XMP + L-glutamine + ATP + H2O = GMP + L-glutamate + AMP + diphosphate + 2 H(+). It participates in purine metabolism; GMP biosynthesis; GMP from XMP (L-Gln route): step 1/1. Its function is as follows. Catalyzes the synthesis of GMP from XMP. The polypeptide is GMP synthase [glutamine-hydrolyzing] (Nitratidesulfovibrio vulgaris (strain DP4) (Desulfovibrio vulgaris)).